The sequence spans 156 residues: Transcriptional repressor NrdR (156 aa).

A zinc finger spans residues 3–34 (CPFCGSMDTRVLDSRPTLDGTAIRRRRECSSC). The region spanning 49–139 (VLVVKKDGRR…VYRDFREVDQ (91 aa)) is the ATP-cone domain.

This sequence belongs to the NrdR family. The cofactor is Zn(2+).

Functionally, negatively regulates transcription of bacterial ribonucleotide reductase nrd genes and operons by binding to NrdR-boxes. This chain is Transcriptional repressor NrdR, found in Thermotoga maritima (strain ATCC 43589 / DSM 3109 / JCM 10099 / NBRC 100826 / MSB8).